The sequence spans 211 residues: ATP phosphoribosyltransferase (211 aa).

Belongs to the ATP phosphoribosyltransferase family. Short subfamily. Heteromultimer composed of HisG and HisZ subunits.

Its subcellular location is the cytoplasm. The enzyme catalyses 1-(5-phospho-beta-D-ribosyl)-ATP + diphosphate = 5-phospho-alpha-D-ribose 1-diphosphate + ATP. Its pathway is amino-acid biosynthesis; L-histidine biosynthesis; L-histidine from 5-phospho-alpha-D-ribose 1-diphosphate: step 1/9. Functionally, catalyzes the condensation of ATP and 5-phosphoribose 1-diphosphate to form N'-(5'-phosphoribosyl)-ATP (PR-ATP). Has a crucial role in the pathway because the rate of histidine biosynthesis seems to be controlled primarily by regulation of HisG enzymatic activity. The polypeptide is ATP phosphoribosyltransferase (Bacillus cereus (strain AH187)).